Consider the following 257-residue polypeptide: MLVIISPAKTLDYESPLATERFTQPELLDKSKQLIKICRDLTPVQISKLMGISDKLAGLNAARFGDWQPKFTPENARQALLAFKGDVYTGLHAQDFSEDDFDFAQQHLRMLSGLYGVLRPLDLMMPYRLEMGIKLDNAKGKDLYSFWGEQITKKLNEALEQQGDDVVVNLASDEYFKSVKPAKLHGELIKPVFLDEKNGKYKVISFYAKKARGLMSRFIIKNRLTQREQLLDFNLEGYAFDEANSQGNELVFKRPEQ.

It belongs to the UPF0246 family.

This is UPF0246 protein Spro_0686 from Serratia proteamaculans (strain 568).